A 516-amino-acid polypeptide reads, in one-letter code: HTDFFTSIGHMTDLINTEKDLVISKLKDYIKAEESKLEQIKKWAEKLDKLTDTATKDPEGFLGHPANAFKLMKRLNTEWGELESLVLKDMSDGFISNMTIQRQFFPNDEDQTGARKALLRLQDTYNLDTDTLSRGNLPGVKHKSFLTAEDCFELGKIRYTEADYYHTELWMEQALKQLDEGEVSSADKVYILDYLSYAVYQQGDLSKAMMLTKRLLELDPEHQRANGNMKYFEYIMAKEKEANKSSTDAEDQTDKETEVKKKDYLPERRKYEMLCRGEGLKMTPRRQKRLFCRYYDGNRNPRYILGPVKQEDEWDKPRIVRFLDIISDEEIETVKELAKPRLSRATVHDPETGKLTTAHYRVSKSAWLSGYESPVVSRINTRIQDLTGLDVSTAEELQVANYGVGGQYEPHFDFGRKDEPDAFKELGTGNRIATWLFYMSDVSAGGATVFPEVGASVWPKKGTAVFWYNLFPSGEGDYSTRHAACPVLVGNKWVSNKWLHERGQEFRRPCTLSELE.

N-linked (GlcNAc...) asparagine glycosylation is present at Asn-97. One copy of the TPR repeat lies at 189–222 (VYILDYLSYAVYQQGDLSKAMMLTKRLLELDPEH). N-linked (GlcNAc...) asparagine glycosylation is present at Asn-243. The 109-residue stretch at 393–501 (TAEELQVANY…KWVSNKWLHE (109 aa)) folds into the Fe2OG dioxygenase domain. Fe cation-binding residues include His-411, Asp-413, and His-482. Position 492 (Lys-492) interacts with 2-oxoglutarate.

Belongs to the P4HA family. In terms of assembly, heterotetramer of two alpha chains and two beta chains (the beta chain is the multi-functional PDI). It depends on Fe(2+) as a cofactor. L-ascorbate serves as cofactor.

It is found in the endoplasmic reticulum lumen. It catalyses the reaction L-prolyl-[collagen] + 2-oxoglutarate + O2 = trans-4-hydroxy-L-prolyl-[collagen] + succinate + CO2. In terms of biological role, catalyzes the post-translational formation of 4-hydroxyproline in -Xaa-Pro-Gly- sequences in collagens and other proteins. The polypeptide is Prolyl 4-hydroxylase subunit alpha-1 (P4HA1) (Gallus gallus (Chicken)).